The following is a 343-amino-acid chain: MASEGVLLGMGNPLLDISCVVDDAFLEKYGLTLNNAILAEDKHLPMYKELAANPDVEYIAGGATQNTIRIAQWMLGESNATSYFGCVGKDEYGDRMFKLASEGGVNIRYDVDEDLPTGTCGVLVVKGERSLVANLSAANKYKIDHLKKPENWAFVEKAKYIYSAGFFLTVSPESMMTVAKHAAETGKYYMINLAAPFICQFFKDPLMELFPYVDFIFGNESEARAFAQVQGWETEDTKVIAVKLAALPKAGGTHKRVAVITQGTDPTIVAEDGKVTEFPVTPIPKEKLVDTNAAGDSFVGGFLSQLVLGKDIAQCVRAGNYAASVIIQRSGCTFPSKPSFESQ.

Residue Asp-296 is part of the active site.

Belongs to the carbohydrate kinase PfkB family. Mg(2+) is required as a cofactor.

It carries out the reaction adenosine + ATP = AMP + ADP + H(+). Its pathway is purine metabolism; AMP biosynthesis via salvage pathway; AMP from adenosine: step 1/1. Its function is as follows. ATP dependent phosphorylation of adenosine and other related nucleoside analogs to monophosphate derivatives. Can also act on the cytokinin isopentenyladenosine to produce isopentenyladenosine monophosphate. The protein is Adenosine kinase (ADK) of Physcomitrium patens (Spreading-leaved earth moss).